Here is a 351-residue protein sequence, read N- to C-terminus: MKAMAAEEEVDSADAGGGSGWLTGWLPTWCPTSTSHLKEAEEKMLKCVPCTYKKEPVRISNGNRIWTLMFSHNISSKTPLVLLHGFGGGLGLWALNFEDLSTDRPVYAFDLLGFGRSSRPRFDSDAEEVENQFVESIEEWRCALRLDKMILLGHNLGGFLAAAYSLKYPSRVSHLILVEPWGFPERPDLADQERPIPVWIRALGAALTPFNPLAGLRIAGPFGLSLVQRLRPDFKRKYSSMFEDDTVTEYIYHCNVQTPSGETAFKNMTIPYGWAKRPMLQRIGGLHPDIPVSVIFGARSCIDGNSGTSIQSLRPKSYVKTIAILGAGHYVYADQPEEFNQKVKEICHTVD.

In terms of domain architecture, AB hydrolase-1 spans 79–184 (PLVLLHGFGG…LILVEPWGFP (106 aa)). Ser124 carries the post-translational modification Phosphoserine. An HXXXXD motif motif is present at residues 329-334 (HYVYAD).

This sequence belongs to the peptidase S33 family. ABHD4/ABHD5 subfamily. In terms of assembly, interacts with ADRP. Interacts with PLIN. Interacts with and PNPLA2. Interacts with PLIN5; promotes interaction with PNPLA2. Highly expressed in the adipose tissue and testes. Weakly expressed in the liver, muscle, kidney, and heart. Expressed by upper epidermal layers and dermal fibroblasts in skin, hepatocytes and hypothalamus in brain (at protein level).

Its subcellular location is the cytoplasm. It localises to the lipid droplet. The protein resides in the cytosol. It carries out the reaction a 1-acyl-sn-glycero-3-phosphate + an acyl-CoA = a 1,2-diacyl-sn-glycero-3-phosphate + CoA. The enzyme catalyses 1-(9Z-octadecenoyl)-sn-glycero-3-phosphate + (9Z)-octadecenoyl-CoA = 1,2-di-(9Z-octadecenoyl)-sn-glycero-3-phosphate + CoA. It catalyses the reaction 1-(9Z-octadecenoyl)-sn-glycero-3-phosphate + hexadecanoyl-CoA = 1-(9Z)-octadecenoyl-2-hexadecanoyl-sn-glycero-3-phosphate + CoA. The catalysed reaction is 1-(9Z-octadecenoyl)-sn-glycero-3-phosphate + octadecanoyl-CoA = 1-(9Z-octadecenoyl)-2-octadecanoyl-sn-glycero-3-phosphate + CoA. It carries out the reaction 1-(9Z-octadecenoyl)-sn-glycero-3-phosphate + (5Z,8Z,11Z,14Z)-eicosatetraenoyl-CoA = 1-(9Z)-octadecenoyl-2-(5Z,8Z,11Z,14Z)-eicosatetraenoyl-sn-glycero-3-phosphate + CoA. The enzyme catalyses eicosanoyl-CoA + 1-(9Z-octadecenoyl)-sn-glycero-3-phosphate = 1-(9Z)-octadecenoyl-2-eicosanoyl-sn-glycero-3-phosphate + CoA. It catalyses the reaction 1-hexadecanoyl-sn-glycero-3-phosphate + (9Z)-octadecenoyl-CoA = 1-hexadecanoyl-2-(9Z-octadecenoyl)-sn-glycero-3-phosphate + CoA. The catalysed reaction is 1-octadecanoyl-sn-glycero-3-phosphate + (9Z)-octadecenoyl-CoA = 1-octadecanoyl-2-(9Z-octadecenoyl)-sn-glycero-3-phosphate + CoA. It carries out the reaction 1-(5Z,8Z,11Z,14Z-eicosatetraenoyl)-sn-glycero-3-phosphate + (9Z)-octadecenoyl-CoA = 1-(5Z,8Z,11Z,14Z)-eicosatetraenoyl-2-(9Z)-octadecenoyl-sn-glycero-3-phosphate + CoA. Acyltransferase activity is inhibited by detergents such as Triton X-100 and 3-[(3-cholamidopropyl)dimethylammonio]-1-propanesulfonate (CHAPS). Acyltransferase activity is inhibited by the presence of magnesium and calcium. Its function is as follows. Coenzyme A-dependent lysophosphatidic acid acyltransferase that catalyzes the transfer of an acyl group on a lysophosphatidic acid. Functions preferentially with 1-oleoyl-lysophosphatidic acid followed by 1-palmitoyl-lysophosphatidic acid, 1-stearoyl-lysophosphatidic acid and 1-arachidonoyl-lysophosphatidic acid as lipid acceptor. Functions preferentially with arachidonoyl-CoA followed by oleoyl-CoA as acyl group donors. Functions in phosphatidic acid biosynthesis. May regulate the cellular storage of triacylglycerol through activation of the phospholipase PNPLA2. Involved in keratinocyte differentiation. Regulates lipid droplet fusion. This is 1-acylglycerol-3-phosphate O-acyltransferase ABHD5 from Mus musculus (Mouse).